Here is a 221-residue protein sequence, read N- to C-terminus: Sugar transporter SWEET1 (221 aa).

7 helical membrane passes run 3–23, 43–63, 68–88, 102–122, 129–149, 160–180, and 186–206; these read AGGV…LGMF, QFLP…YGVL, TLII…LAYL, ATLL…VPDL, LGLF…ADLA, LSFS…IYGF, and YITV…GLFC. A MtN3/slv 1 domain is found at 10–94; it reads FLSSACVLFT…LAYLHYSPQK (85 aa). The MtN3/slv 2 domain occupies 127 to 212; sequence QQLGLFCSVF…GLFCKYPPEQ (86 aa). The interval 149-221 is mediates interaction with TRPV2; sequence AKIVQTKSTQ…QDRKYRLLQT (73 aa).

The protein belongs to the SWEET sugar transporter family. As to quaternary structure, interacts with TRPV2; the interaction probably occurs intracellularly and depends on TRPV2 N-glycosylation. In terms of tissue distribution, expressed at high levels in lung, placenta, spleen and thymus, at intermediate levels in brain, heart, kidney and testis, and at low levels in bone marrow, liver and lymph node. Within the thymus expression is highest in non-lymphoid cells.

Its subcellular location is the golgi apparatus membrane. The protein resides in the cell membrane. Mediates sugar transport across membranes. May regulate the expression of RAG1 a gene involved in V(D)J recombination. The chain is Sugar transporter SWEET1 (Slc50a1) from Mus musculus (Mouse).